Reading from the N-terminus, the 557-residue chain is CCR4-NOT transcription complex subunit 6 (557 aa).

LRR repeat units follow at residues 52 to 73, 75 to 96, 98 to 120, and 121 to 143; these read HLTALHLSDNSLSRIPSDIAKL, NLVYLDLSSNKIRSLPAELGNM, SLRELHLNNNLLRVLPFELGKLF, and QLQTLGLKGNPLTQDILNLYQEP. Positions 153 to 557 are nuclease domain; that stretch reads LLDNLSGTAK…VNGIHLPGRR (405 aa). Residue E240 participates in Mg(2+) binding. Residues E240, E276, H361, and P366 each coordinate substrate. D412 provides a ligand contact to Mg(2+). D412 serves as the catalytic Proton donor/acceptor. 3 residues coordinate substrate: N414, N481, and F486.

It belongs to the CCR4/nocturin family. As to quaternary structure, component of the CCR4-NOT complex; distinct complexes seem to exist that differ in the participation of probably mutually exclusive catalytic subunits; the complex contains two deadenylase subunits, CNOT6 or CNOT6L, and CNOT7 or CNOT8. Interacts with CNOT7 and CNOT8. Interacts with UNR. Interacts with ZFP36L1 (via N-terminus). Interacts with ZNF335. It depends on Mg(2+) as a cofactor.

The protein resides in the cytoplasm. It localises to the nucleus. The catalysed reaction is Exonucleolytic cleavage of poly(A) to 5'-AMP.. Functionally, poly(A) nuclease with 3'-5' RNase activity. Catalytic component of the CCR4-NOT complex which is one of the major cellular mRNA deadenylases and is linked to various cellular processes including bulk mRNA degradation, miRNA-mediated repression, translational repression during translational initiation and general transcription regulation. Additional complex functions may be a consequence of its influence on mRNA expression. Involved in mRNA decay mediated by the major-protein-coding determinant of instability (mCRD) of the FOS gene in the cytoplasm. In the presence of ZNF335, enhances ligand-dependent transcriptional activity of nuclear hormone receptors, including RARA. The increase of ligand-dependent ESR1-mediated transcription is much smaller, if any. Mediates cell proliferation and cell survival and prevents cellular senescence. In Homo sapiens (Human), this protein is CCR4-NOT transcription complex subunit 6 (CNOT6).